The sequence spans 398 residues: Phosphoglycerate kinase (398 aa).

Substrate is bound by residues 21-23 (DFN), R36, 59-62 (HFGR), R117, and R150. Residues K200, E321, and 351-354 (GGDS) contribute to the ATP site.

Belongs to the phosphoglycerate kinase family. In terms of assembly, monomer.

It localises to the cytoplasm. The catalysed reaction is (2R)-3-phosphoglycerate + ATP = (2R)-3-phospho-glyceroyl phosphate + ADP. It participates in carbohydrate degradation; glycolysis; pyruvate from D-glyceraldehyde 3-phosphate: step 2/5. This Wolbachia pipientis wMel protein is Phosphoglycerate kinase.